A 236-amino-acid polypeptide reads, in one-letter code: DNA repair protein RecO (236 aa).

The protein belongs to the RecO family.

In terms of biological role, involved in DNA repair and RecF pathway recombination. The protein is DNA repair protein RecO of Photobacterium profundum (strain SS9).